The chain runs to 115 residues: UPF0738 protein SE_0694 (115 aa).

This sequence belongs to the UPF0738 family.

This Staphylococcus epidermidis (strain ATCC 12228 / FDA PCI 1200) protein is UPF0738 protein SE_0694.